We begin with the raw amino-acid sequence, 434 residues long: UPF0053 protein YrkA (434 aa).

In terms of domain architecture, CNNM transmembrane spans 1-201 (MTTINLIIFT…YKSGEINQNE (201 aa)). 3 helical membrane-spanning segments follow: residues 7-27 (IIFTLLIVLTAFFVATEFAIV), 64-84 (LGITVTALGIGWVGESTFEVI), and 101-121 (VLILVIAFVMATFLHVVVGEL). 2 consecutive CBS domains span residues 220-282 (MIPR…KIKE) and 289-346 (HINP…IRDE).

Belongs to the UPF0053 family.

Its subcellular location is the cell membrane. The protein is UPF0053 protein YrkA (yrkA) of Bacillus subtilis (strain 168).